Here is a 1755-residue protein sequence, read N- to C-terminus: Transposon Ty1-LR3 Gag-Pol polyprotein (1755 aa).

Positions 1–16 are enriched in low complexity; it reads MESQQLSQHSHISHGS. Disordered stretches follow at residues 1-93, 126-173, and 352-421; these read MESQ…MMTQ, PQSQ…RPPP, and GSRN…SKST. Composition is skewed to polar residues over residues 48–60 and 127–152; these read TKAN…TPAS and QSQF…GNTF. The span at 153-165 shows a compositional bias: low complexity; that stretch reads TDSSSADSDMTST. Residues 299–401 form an RNA-binding region; the sequence is NNGIHINNKV…NSKSKTARAH (103 aa). Over residues 402–418 the composition is skewed to low complexity; sequence NVSTSNNSPSTDNDSIS. S416 is subject to Phosphoserine. The active-site For protease activity; shared with dimeric partner is the D461. The segment at 583-640 is integrase-type zinc finger-like; that stretch reads NVHTSESTRKYPYPFIHRMLAHANAQTIRYSLKNNTITYFNESDVDWSSAIDYQCPDC. Positions 660–829 constitute an Integrase catalytic domain; the sequence is NSYEPFQYLH…SQHAGLAGLD (170 aa). Residues D671 and D736 each contribute to the Mg(2+) site. Disordered stretches follow at residues 956–1087, 1092–1111, and 1129–1172; these read SKAV…ETEK, RSPS…NIVP, and ADLP…SNAY. Low complexity predominate over residues 960-969; the sequence is SPTDSTPPST. The span at 1005-1015 shows a compositional bias: polar residues; that stretch reads STPQISNIEST. The segment covering 1038–1052 has biased composition (basic and acidic residues); that stretch reads ESSHASKSKDFRHSD. 2 stretches are compositionally biased toward polar residues: residues 1053 to 1082 and 1101 to 1111; these read SYSN…QISD and PENNSSHNIVP. Positions 1178–1212 match the Bipartite nuclear localization signal motif; the sequence is KKRSLEDNETEIKVSRDTWNTKNMRSLEPPRSKKR. In terms of domain architecture, Reverse transcriptase Ty1/copia-type spans 1338 to 1476; sequence NNYYITQLDI…DILGLEIKYQ (139 aa). Positions 1346, 1427, 1428, 1610, 1652, and 1685 each coordinate Mg(2+). An RNase H Ty1/copia-type domain is found at 1610 to 1752; that stretch reads DASYGNQPYY…IKTFKLLTNK (143 aa).

In terms of assembly, the capsid protein forms a homotrimer, from which the VLPs are assembled. The protease is a homodimer, whose active site consists of two apposed aspartic acid residues. Post-translationally, initially, virus-like particles (VLPs) are composed of the structural unprocessed proteins Gag and Gag-Pol, and also contain the host initiator methionine tRNA (tRNA(i)-Met) which serves as a primer for minus-strand DNA synthesis, and a dimer of genomic Ty RNA. Processing of the polyproteins occurs within the particle and proceeds by an ordered pathway, called maturation. First, the protease (PR) is released by autocatalytic cleavage of the Gag-Pol polyprotein yielding capsid protein p45 and a Pol-p154 precursor protein. This cleavage is a prerequisite for subsequent processing of Pol-p154 at the remaining sites to release the mature structural and catalytic proteins. Maturation takes place prior to the RT reaction and is required to produce transposition-competent VLPs.

Its subcellular location is the cytoplasm. It is found in the nucleus. It catalyses the reaction DNA(n) + a 2'-deoxyribonucleoside 5'-triphosphate = DNA(n+1) + diphosphate. It carries out the reaction Endonucleolytic cleavage to 5'-phosphomonoester.. Capsid protein (CA) is the structural component of the virus-like particle (VLP), forming the shell that encapsulates the retrotransposons dimeric RNA genome. The particles are assembled from trimer-clustered units and there are holes in the capsid shells that allow for the diffusion of macromolecules. CA also has nucleocapsid-like chaperone activity, promoting primer tRNA(i)-Met annealing to the multipartite primer-binding site (PBS), dimerization of Ty1 RNA and initiation of reverse transcription. Its function is as follows. The aspartyl protease (PR) mediates the proteolytic cleavages of the Gag and Gag-Pol polyproteins after assembly of the VLP. In terms of biological role, reverse transcriptase/ribonuclease H (RT) is a multifunctional enzyme that catalyzes the conversion of the retro-elements RNA genome into dsDNA within the VLP. The enzyme displays a DNA polymerase activity that can copy either DNA or RNA templates, and a ribonuclease H (RNase H) activity that cleaves the RNA strand of RNA-DNA heteroduplexes during plus-strand synthesis and hydrolyzes RNA primers. The conversion leads to a linear dsDNA copy of the retrotransposon that includes long terminal repeats (LTRs) at both ends. Functionally, integrase (IN) targets the VLP to the nucleus, where a subparticle preintegration complex (PIC) containing at least integrase and the newly synthesized dsDNA copy of the retrotransposon must transit the nuclear membrane. Once in the nucleus, integrase performs the integration of the dsDNA into the host genome. This chain is Transposon Ty1-LR3 Gag-Pol polyprotein (TY1B-LR3), found in Saccharomyces cerevisiae (strain ATCC 204508 / S288c) (Baker's yeast).